The primary structure comprises 217 residues: Small ribosomal subunit protein uS3 (217 aa).

The KH type-2 domain occupies 38–106 (IRKFIDNELK…KVHINVIEIK (69 aa)).

This sequence belongs to the universal ribosomal protein uS3 family. As to quaternary structure, part of the 30S ribosomal subunit. Forms a tight complex with proteins S10 and S14.

In terms of biological role, binds the lower part of the 30S subunit head. Binds mRNA in the 70S ribosome, positioning it for translation. This is Small ribosomal subunit protein uS3 (rpsC) from Staphylococcus aureus (strain COL).